The primary structure comprises 99 residues: NADH-quinone oxidoreductase subunit K (99 aa).

3 helical membrane-spanning segments follow: residues 3-23 (PMYY…GVLL), 28-48 (IIVF…LVTF), and 62-82 (FFVM…IVAI).

This sequence belongs to the complex I subunit 4L family. In terms of assembly, NDH-1 is composed of 14 different subunits. Subunits NuoA, H, J, K, L, M, N constitute the membrane sector of the complex.

The protein resides in the cell membrane. It carries out the reaction a quinone + NADH + 5 H(+)(in) = a quinol + NAD(+) + 4 H(+)(out). In terms of biological role, NDH-1 shuttles electrons from NADH, via FMN and iron-sulfur (Fe-S) centers, to quinones in the respiratory chain. The immediate electron acceptor for the enzyme in this species is believed to be a menaquinone. Couples the redox reaction to proton translocation (for every two electrons transferred, four hydrogen ions are translocated across the cytoplasmic membrane), and thus conserves the redox energy in a proton gradient. The polypeptide is NADH-quinone oxidoreductase subunit K (Acidothermus cellulolyticus (strain ATCC 43068 / DSM 8971 / 11B)).